The following is a 255-amino-acid chain: Type III pantothenate kinase (255 aa).

6–13 (DVGNSYTM) serves as a coordination point for ATP. 107-110 (GADR) lines the substrate pocket. Asp109 acts as the Proton acceptor in catalysis. Asp129 lines the K(+) pocket. Thr132 is a binding site for ATP. Thr183 contacts substrate.

Belongs to the type III pantothenate kinase family. In terms of assembly, homodimer. The cofactor is NH4(+). K(+) is required as a cofactor.

It is found in the cytoplasm. The enzyme catalyses (R)-pantothenate + ATP = (R)-4'-phosphopantothenate + ADP + H(+). It participates in cofactor biosynthesis; coenzyme A biosynthesis; CoA from (R)-pantothenate: step 1/5. Its function is as follows. Catalyzes the phosphorylation of pantothenate (Pan), the first step in CoA biosynthesis. In Petrotoga mobilis (strain DSM 10674 / SJ95), this protein is Type III pantothenate kinase.